Consider the following 149-residue polypeptide: Large ribosomal subunit protein bL9 (149 aa).

Belongs to the bacterial ribosomal protein bL9 family.

In terms of biological role, binds to the 23S rRNA. The polypeptide is Large ribosomal subunit protein bL9 (Pasteurella multocida (strain Pm70)).